A 288-amino-acid chain; its full sequence is Solute carrier family 25 member 45 (288 aa).

3 Solcar repeats span residues 1-83 (MPVE…TLLA), 97-191 (PSYT…LCRQ), and 199-286 (PSSA…LLRL). 6 helical membrane passes run 6-26 (FVAG…FDTV), 58-78 (GMSF…GVYS), 102-122 (IFIA…PFDL), 166-186 (GSWA…VTYE), 202-222 (ATVL…ATPF), and 266-286 (SARA…LLRL).

Belongs to the mitochondrial carrier (TC 2.A.29) family. In terms of tissue distribution, widely expressed, with highest levels in testis, liver and kidney and low levels in brain, including cortex, cerebellum, hippocampus and hypothalamus, and heart.

The protein resides in the mitochondrion inner membrane. This is Solute carrier family 25 member 45 (Slc25a45) from Mus musculus (Mouse).